A 471-amino-acid polypeptide reads, in one-letter code: ATP synthase subunit beta (471 aa).

An ATP-binding site is contributed by 157–164 (GGAGVGKT).

It belongs to the ATPase alpha/beta chains family. F-type ATPases have 2 components, CF(1) - the catalytic core - and CF(0) - the membrane proton channel. CF(1) has five subunits: alpha(3), beta(3), gamma(1), delta(1), epsilon(1). CF(0) has three main subunits: a(1), b(2) and c(9-12). The alpha and beta chains form an alternating ring which encloses part of the gamma chain. CF(1) is attached to CF(0) by a central stalk formed by the gamma and epsilon chains, while a peripheral stalk is formed by the delta and b chains.

It is found in the cell inner membrane. It carries out the reaction ATP + H2O + 4 H(+)(in) = ADP + phosphate + 5 H(+)(out). Functionally, produces ATP from ADP in the presence of a proton gradient across the membrane. The catalytic sites are hosted primarily by the beta subunits. This chain is ATP synthase subunit beta, found in Trichlorobacter lovleyi (strain ATCC BAA-1151 / DSM 17278 / SZ) (Geobacter lovleyi).